Here is a 90-residue protein sequence, read N- to C-terminus: Small ribosomal subunit protein bS18B (90 aa).

It belongs to the bacterial ribosomal protein bS18 family. As to quaternary structure, part of the 30S ribosomal subunit. Forms a tight heterodimer with protein bS6.

In terms of biological role, binds as a heterodimer with protein bS6 to the central domain of the 16S rRNA, where it helps stabilize the platform of the 30S subunit. This chain is Small ribosomal subunit protein bS18B, found in Roseiflexus sp. (strain RS-1).